A 183-amino-acid polypeptide reads, in one-letter code: Peptidyl-tRNA hydrolase (183 aa).

A tRNA-binding site is contributed by Tyr-14. His-19 acts as the Proton acceptor in catalysis. Residues Phe-64 and Asn-66 each coordinate tRNA.

It belongs to the PTH family. Monomer.

It localises to the cytoplasm. The catalysed reaction is an N-acyl-L-alpha-aminoacyl-tRNA + H2O = an N-acyl-L-amino acid + a tRNA + H(+). Functionally, hydrolyzes ribosome-free peptidyl-tRNAs (with 1 or more amino acids incorporated), which drop off the ribosome during protein synthesis, or as a result of ribosome stalling. In terms of biological role, catalyzes the release of premature peptidyl moieties from peptidyl-tRNA molecules trapped in stalled 50S ribosomal subunits, and thus maintains levels of free tRNAs and 50S ribosomes. The chain is Peptidyl-tRNA hydrolase from Syntrophomonas wolfei subsp. wolfei (strain DSM 2245B / Goettingen).